Consider the following 182-residue polypeptide: RNA pyrophosphohydrolase (182 aa).

The region spanning 6 to 149 (GYRPNVGIIL…KRLVYEQALN (144 aa)) is the Nudix hydrolase domain. The Nudix box motif lies at 38 to 59 (GGIKRGETPEEAMFRELYEEVG). Residues 162 to 182 (PRHKKEQEPFSDVVDSVRSEE) are disordered.

This sequence belongs to the Nudix hydrolase family. RppH subfamily. The cofactor is a divalent metal cation.

Its function is as follows. Accelerates the degradation of transcripts by removing pyrophosphate from the 5'-end of triphosphorylated RNA, leading to a more labile monophosphorylated state that can stimulate subsequent ribonuclease cleavage. The sequence is that of RNA pyrophosphohydrolase from Dechloromonas aromatica (strain RCB).